The following is a 323-amino-acid chain: Type II restriction enzyme BsoBI (323 aa).

Residues Asp212, Glu240, and Lys242 each coordinate Mg(2+).

In terms of assembly, homodimer.

The catalysed reaction is Endonucleolytic cleavage of DNA to give specific double-stranded fragments with terminal 5'-phosphates.. In terms of biological role, a P subtype restriction enzyme that recognizes the double-stranded sequence 5'-CYCGRG-3' and cleaves after C-1. The polypeptide is Type II restriction enzyme BsoBI (Geobacillus stearothermophilus (Bacillus stearothermophilus)).